Here is a 138-residue protein sequence, read N- to C-terminus: ATP synthase epsilon chain (138 aa).

It belongs to the ATPase epsilon chain family. F-type ATPases have 2 components, CF(1) - the catalytic core - and CF(0) - the membrane proton channel. CF(1) has five subunits: alpha(3), beta(3), gamma(1), delta(1), epsilon(1). CF(0) has three main subunits: a, b and c.

Its subcellular location is the cell inner membrane. Produces ATP from ADP in the presence of a proton gradient across the membrane. The sequence is that of ATP synthase epsilon chain from Idiomarina loihiensis (strain ATCC BAA-735 / DSM 15497 / L2-TR).